The primary structure comprises 259 residues: GTP cyclohydrolase FolE2 (259 aa).

This sequence belongs to the GTP cyclohydrolase IV family.

It catalyses the reaction GTP + H2O = 7,8-dihydroneopterin 3'-triphosphate + formate + H(+). Its pathway is cofactor biosynthesis; 7,8-dihydroneopterin triphosphate biosynthesis; 7,8-dihydroneopterin triphosphate from GTP: step 1/1. Converts GTP to 7,8-dihydroneopterin triphosphate. This Nitratidesulfovibrio vulgaris (strain DSM 19637 / Miyazaki F) (Desulfovibrio vulgaris) protein is GTP cyclohydrolase FolE2.